We begin with the raw amino-acid sequence, 439 residues long: Elongation factor 1-alpha 2 (439 aa).

A tr-type G domain is found at 6–229; that stretch reads KDHLNLVVIG…DEFKVPKRPI (224 aa). Residues 15-22 are G1; it reads GHVDSGKS. 15–22 contacts GTP; it reads GHVDSGKS. A G2 region spans residues 71–75; that stretch reads GITIN. Positions 92–95 are G3; that stretch reads DAPG. GTP contacts are provided by residues 92 to 96 and 154 to 157; these read DAPGH and NKMD. Positions 154–157 are G4; sequence NKMD. The segment at 193 to 195 is G5; it reads SGF.

Belongs to the TRAFAC class translation factor GTPase superfamily. Classic translation factor GTPase family. EF-Tu/EF-1A subfamily.

It localises to the cytoplasm. Functionally, this protein promotes the GTP-dependent binding of aminoacyl-tRNA to the A-site of ribosomes during protein biosynthesis. In Euplotes crassus, this protein is Elongation factor 1-alpha 2 (EFA2).